The chain runs to 507 residues: Cytochrome P450 monooxygenase nodZ (507 aa).

2 consecutive transmembrane segments (helical) span residues 1 to 21 and 205 to 225; these read MITA…FSLL and GFLH…PWFL. N-linked (GlcNAc...) asparagine glycosylation occurs at Asn352. Residue Cys445 coordinates heme.

It belongs to the cytochrome P450 family. Requires heme as cofactor.

Its subcellular location is the membrane. It functions in the pathway secondary metabolite biosynthesis. Functionally, cytochrome P450 monooxygenase; part of the gene cluster that mediates the biosynthesis of the indole diterpenes nodulisporic acids (NA). Nodulisporic acid A (NAA) and its chemically modified derivatives are of particular significance because of their highly potent insecticidal activity against blood-feeding arthropods and lack of observable adverse effects on mammals, in particular the tremogenicity associated with the paspaline-derived IDTs is not observed. The geranylgeranyl diphosphate (GGPP) synthase ggs1, localized outside of the cluster, is proposed to catalyze the first step in nodulisporic acid biosynthesis via conversion of farnesyl pyrophosphate and isopentyl pyrophosphate into geranylgeranyl pyrophosphate (GGPP). Condensation of indole-3-glycerol phosphate with GGPP by the prenyl transferase nodC then forms 3-geranylgeranylindole (3-GGI). Epoxidation by the FAD-dependent monooxygenase nodM leads to a single-epoxidized-GGI that is substrate of the terpene cyclase nodB for cyclization to yield emindole SB. The terminal methyl carbon, C28, of emindole SB is then oxidized by the cytochrome P450 monooxygenase nodW to produce nodulisporic acid F (NAF), the pentacyclic core of NAA. NAF is converted to nodulisporic acid E (NAE) via prenylation. This step is probably performed by one of the indole diterpene prenyltransferases nodD1 or nodD2. Several oxidation steps performed by the FAD-linked oxidoreductase nodO and one of the cytochrome P450 monooxygenase nodR, nodX or nodZ further convert NAE to nodulisporic acid D (NAD). NAD is substrate of cytochrome P450 monooxygenase nodJ to produce the precursor of nodulisporic acid C (NAC), converted to NAC by one of the indole diterpene prenyltransferases nodD1 or nodD2. The FAD-dependent monooxygenase nodY2 then oxidizes NAC to nodulisporic acid B (NAB). Finally NAB is converted to NAA by one of the cytochrome P450 monooxygenases nodR, nodX or nodZ. This chain is Cytochrome P450 monooxygenase nodZ, found in Hypoxylon pulicicidum.